A 271-amino-acid polypeptide reads, in one-letter code: L-aspartate dehydrogenase (271 aa).

NAD(+) contacts are provided by A124 and N192. H222 is an active-site residue.

It belongs to the L-aspartate dehydrogenase family.

The catalysed reaction is L-aspartate + NADP(+) + H2O = oxaloacetate + NH4(+) + NADPH + H(+). The enzyme catalyses L-aspartate + NAD(+) + H2O = oxaloacetate + NH4(+) + NADH + H(+). It participates in cofactor biosynthesis; NAD(+) biosynthesis; iminoaspartate from L-aspartate (dehydrogenase route): step 1/1. Its function is as follows. Specifically catalyzes the NAD or NADP-dependent dehydrogenation of L-aspartate to iminoaspartate. This Methanosarcina barkeri (strain Fusaro / DSM 804) protein is L-aspartate dehydrogenase.